A 766-amino-acid polypeptide reads, in one-letter code: TRP-like ion channel protein flc1 (766 aa).

Positions 1–24 are cleaved as a signal peptide; that stretch reads MRIPLFILTFLFTFFSLATTPVSA. At 25 to 170 the chain is on the lumenal side; the sequence is DSGVLYTDAV…ANGKTAHQKG (146 aa). N-linked (GlcNAc...) asparagine glycosylation is found at Asn-56, Asn-73, Asn-89, and Asn-109. The helical transmembrane segment at 171–191 threads the bilayer; the sequence is VIWASAIFTLVAFLVAIWHTA. Over 192–205 the chain is Cytoplasmic; the sequence is SGTSTSPIQYRWFD. A helical membrane pass occupies residues 206 to 226; sequence ILFIFQVAAASGLLHLNYPLV. The Lumenal segment spans residues 227–351; sequence YTNFVQNFHW…RIPEANAYDT (125 aa). N-linked (GlcNAc...) asparagine glycosylation occurs at Asn-325. A helical membrane pass occupies residues 352 to 372; it reads IWFVFLALIGIFIAFHVLLFG. The Cytoplasmic segment spans residues 373–407; the sequence is MVLLFDRMGRNRSHLGWAARLRRMWWPFCVGNSLR. A helical transmembrane segment spans residues 408 to 428; the sequence is LCLIGFFPIWIFAFWQFHIGD. Over 429 to 432 the chain is Lumenal; the sequence is SGLS. A helical transmembrane segment spans residues 433–453; that stretch reads IFWAVFGILLTLVPLATAFLL. At 454–493 the chain is on the cytoplasmic side; that stretch reads SLLRARRISSTSPEINSLYTSFRYFHSIGVLYRQYRQKFH. The chain crosses the membrane as a helical span at residues 494–514; sequence YFWFTPFVLAMIARAGFIAFG. Residues 515–517 are Lumenal-facing; it reads PAS. The chain crosses the membrane as a helical span at residues 518–538; it reads AWAQVIGNLVVEFIVLVALLA. At 539 to 548 the chain is on the cytoplasmic side; the sequence is CRPHKDKKGD. A helical membrane pass occupies residues 549 to 569; sequence WLGAFLSICRLIAIGLLIAFI. Residues 570-580 are Lumenal-facing; sequence PDMNVKPIPRA. A helical transmembrane segment spans residues 581–601; the sequence is VIAFVIIVFYGVPVVFLFVGF. Over 602-766 the chain is Cytoplasmic; the sequence is LWNIGYGYLW…TDEKQWSRRY (165 aa). A disordered region spans residues 704-766; it reads ASSADGALSP…TDEKQWSRRY (63 aa). A compositionally biased stretch (basic and acidic residues) spans 757–766; the sequence is TDEKQWSRRY.

Belongs to the transient receptor potential (TRP) ion channel family.

Its subcellular location is the endoplasmic reticulum membrane. In terms of biological role, endoplasmic reticulum membrane flavin carrier protein that plays a crucial role in Ca(2+) signaling/homeostasis via the modulation of the calcineurin-Crz1 stress response pathway which is important for both stress responses and virulence. The chain is TRP-like ion channel protein flc1 from Cryptococcus neoformans var. grubii serotype A (strain H99 / ATCC 208821 / CBS 10515 / FGSC 9487) (Filobasidiella neoformans var. grubii).